The chain runs to 315 residues: NAD-dependent protein lipoamidase sirtuin-4, mitochondrial (315 aa).

Residues M1–S29 constitute a mitochondrion transit peptide. In terms of domain architecture, Deacetylase sirtuin-type spans P38–R315. NAD(+) contacts are provided by residues G63–Y83 and Q144–D147. The active-site Proton acceptor is the H162. 4 residues coordinate Zn(2+): C170, C173, C221, and C224. Residues G261–S263, N287–G289, and C305 contribute to the NAD(+) site.

The protein belongs to the sirtuin family. Class II subfamily. Interacts with GLUD1, IDE and SLC25A5. Interacts with DLAT and PDHX. Interacts with MCCC1 (via the biotin carboxylation domain). Interacts with PCCA and PC. Zn(2+) serves as cofactor.

The protein localises to the mitochondrion matrix. The catalysed reaction is N(6)-[(R)-lipoyl]-L-lysyl-[protein] + NAD(+) + H2O = 2''-O-lipoyl-ADP-D-ribose + nicotinamide + L-lysyl-[protein]. The enzyme catalyses N(6)-biotinyl-L-lysyl-[protein] + NAD(+) + H2O = 2''-O-biotinyl-ADP-D-ribose + nicotinamide + L-lysyl-[protein]. It carries out the reaction N(6)-acetyl-L-lysyl-[protein] + NAD(+) + H2O = 2''-O-acetyl-ADP-D-ribose + nicotinamide + L-lysyl-[protein]. It catalyses the reaction L-cysteinyl-[protein] + NAD(+) = S-(ADP-D-ribosyl)-L-cysteinyl-[protein] + nicotinamide + H(+). Its function is as follows. Acts as a NAD-dependent protein lipoamidase, biotinylase, deacetylase and ADP-ribosyl transferase. Catalyzes more efficiently removal of lipoyl- and biotinyl- than acetyl-lysine modifications. Inhibits the pyruvate dehydrogenase complex (PDH) activity via the enzymatic hydrolysis of the lipoamide cofactor from the E2 component, DLAT, in a phosphorylation-independent manner. Catalyzes the transfer of ADP-ribosyl groups onto target proteins, including mitochondrial GLUD1, inhibiting GLUD1 enzyme activity. Acts as a negative regulator of mitochondrial glutamine metabolism by mediating mono ADP-ribosylation of GLUD1: expressed in response to DNA damage and negatively regulates anaplerosis by inhibiting GLUD1, leading to block metabolism of glutamine into tricarboxylic acid cycle and promoting cell cycle arrest. In response to mTORC1 signal, SIRT4 expression is repressed, promoting anaplerosis and cell proliferation. Acts as a tumor suppressor. Also acts as a NAD-dependent protein deacetylase: mediates deacetylation of 'Lys-471' of MLYCD, inhibiting its activity, thereby acting as a regulator of lipid homeostasis. Does not seem to deacetylate PC. Controls fatty acid oxidation by inhibiting PPARA transcriptional activation. Impairs SIRT1-PPARA interaction probably through the regulation of NAD(+) levels. Down-regulates insulin secretion. The protein is NAD-dependent protein lipoamidase sirtuin-4, mitochondrial of Bos taurus (Bovine).